Reading from the N-terminus, the 114-residue chain is Large ribosomal subunit protein bL19 (114 aa).

It belongs to the bacterial ribosomal protein bL19 family.

Functionally, this protein is located at the 30S-50S ribosomal subunit interface and may play a role in the structure and function of the aminoacyl-tRNA binding site. This chain is Large ribosomal subunit protein bL19, found in Clavibacter sepedonicus (Clavibacter michiganensis subsp. sepedonicus).